The chain runs to 115 residues: DNA-binding protein STK_13740 (115 aa).

This sequence belongs to the PDCD5 family.

This Sulfurisphaera tokodaii (strain DSM 16993 / JCM 10545 / NBRC 100140 / 7) (Sulfolobus tokodaii) protein is DNA-binding protein STK_13740.